A 339-amino-acid polypeptide reads, in one-letter code: Probable E3 ubiquitin-protein ligase BAH1-like 1 (339 aa).

The SPX domain occupies 1–163; the sequence is MKFGAIYEEY…GSVSGRDFKS (163 aa). The segment at 235–284 adopts an RING-type zinc-finger fold; it reads CPICLDTLFNPYALSCGHLFCKGCACGAASVYIFQGVKSAPPEAKCPVCR.

It belongs to the RING-type zinc finger family.

It catalyses the reaction S-ubiquitinyl-[E2 ubiquitin-conjugating enzyme]-L-cysteine + [acceptor protein]-L-lysine = [E2 ubiquitin-conjugating enzyme]-L-cysteine + N(6)-ubiquitinyl-[acceptor protein]-L-lysine.. It participates in protein modification; protein ubiquitination. The protein is Probable E3 ubiquitin-protein ligase BAH1-like 1 of Oryza sativa subsp. indica (Rice).